Here is a 273-residue protein sequence, read N- to C-terminus: MDRYLVFGHPVRHSKSPFIHTLFARQTQQELEYGLAEPAVEEFATSLRAFFAQGGKGCNVTVPFKEQAFALVDRLSPRARRAGAVNTIKLTDDGVLLGDNTDGAGLVADLKAHGVALAGSRILLLGAGGAARGALAPLLAEQPEALVIANRTHARAEQLAAEFRDLGAVSAQTYERLGGHFDLIINSTSASLQGELPPLVPALIHADIAIYDMMYGATDTPFIAWAKGQGARQTVDGLGMLVEQAAEAFTVWRGIRPGTKQVLRELKRNLGTL.

Shikimate contacts are provided by residues 14-16 (SKS) and Thr61. The active-site Proton acceptor is the Lys65. Residues Asn86 and Asp102 each coordinate shikimate. Residues 126–130 (GAGGA), 150–155 (NRTHAR), and Met213 each bind NADP(+). Tyr215 is a binding site for shikimate. Gly237 is a binding site for NADP(+).

It belongs to the shikimate dehydrogenase family. As to quaternary structure, homodimer.

It catalyses the reaction shikimate + NADP(+) = 3-dehydroshikimate + NADPH + H(+). It functions in the pathway metabolic intermediate biosynthesis; chorismate biosynthesis; chorismate from D-erythrose 4-phosphate and phosphoenolpyruvate: step 4/7. Functionally, involved in the biosynthesis of the chorismate, which leads to the biosynthesis of aromatic amino acids. Catalyzes the reversible NADPH linked reduction of 3-dehydroshikimate (DHSA) to yield shikimate (SA). The sequence is that of Shikimate dehydrogenase (NADP(+)) from Aeromonas hydrophila subsp. hydrophila (strain ATCC 7966 / DSM 30187 / BCRC 13018 / CCUG 14551 / JCM 1027 / KCTC 2358 / NCIMB 9240 / NCTC 8049).